Reading from the N-terminus, the 328-residue chain is Stress response kinase A (328 aa).

Catalysis depends on aspartate 201, which acts as the Proton acceptor. 2 residues coordinate Mg(2+): asparagine 206 and aspartate 217. The active site involves aspartate 217.

It belongs to the SrkA/RdoA protein kinase family. In terms of assembly, monomer. The cofactor is Mg(2+).

The protein resides in the cytoplasm. It catalyses the reaction L-seryl-[protein] + ATP = O-phospho-L-seryl-[protein] + ADP + H(+). It carries out the reaction L-threonyl-[protein] + ATP = O-phospho-L-threonyl-[protein] + ADP + H(+). Functionally, a protein kinase that phosphorylates Ser and Thr residues. Probably acts to suppress the effects of stress linked to accumulation of reactive oxygen species. Probably involved in the extracytoplasmic stress response. The chain is Stress response kinase A from Escherichia coli O6:H1 (strain CFT073 / ATCC 700928 / UPEC).